The following is a 214-amino-acid chain: Thymidylate kinase (214 aa).

11–18 (GPEGAGKT) is an ATP binding site.

It belongs to the thymidylate kinase family.

The enzyme catalyses dTMP + ATP = dTDP + ADP. Its function is as follows. Phosphorylation of dTMP to form dTDP in both de novo and salvage pathways of dTTP synthesis. The protein is Thymidylate kinase of Leuconostoc citreum (strain KM20).